Here is a 293-residue protein sequence, read N- to C-terminus: Shikimate dehydrogenase (NADP(+)) (293 aa).

Shikimate contacts are provided by residues 26–28 (SKS) and Thr-73. Residue Lys-77 is the Proton acceptor of the active site. Asp-89 lines the NADP(+) pocket. Positions 98 and 113 each coordinate shikimate. Residues 137–141 (GAGGA), 161–166 (NRTKQR), and Ile-231 contribute to the NADP(+) site. Tyr-233 is a shikimate binding site. Position 254 (Gly-254) interacts with NADP(+).

The protein belongs to the shikimate dehydrogenase family. In terms of assembly, homodimer.

The enzyme catalyses shikimate + NADP(+) = 3-dehydroshikimate + NADPH + H(+). It participates in metabolic intermediate biosynthesis; chorismate biosynthesis; chorismate from D-erythrose 4-phosphate and phosphoenolpyruvate: step 4/7. Its function is as follows. Involved in the biosynthesis of the chorismate, which leads to the biosynthesis of aromatic amino acids. Catalyzes the reversible NADPH linked reduction of 3-dehydroshikimate (DHSA) to yield shikimate (SA). The sequence is that of Shikimate dehydrogenase (NADP(+)) from Bartonella henselae (strain ATCC 49882 / DSM 28221 / CCUG 30454 / Houston 1) (Rochalimaea henselae).